The primary structure comprises 39 residues: Photosystem II reaction center protein L (39 aa).

Residues 18–38 (SLYLGLLLTFVMGILFSSYFF) traverse the membrane as a helical segment.

Belongs to the PsbL family. In terms of assembly, PSII is composed of 1 copy each of membrane proteins PsbA, PsbB, PsbC, PsbD, PsbE, PsbF, PsbH, PsbI, PsbJ, PsbK, PsbL, PsbM, PsbT, PsbX, PsbY, Psb30/Ycf12, peripheral proteins PsbO, CyanoQ (PsbQ), PsbU, PsbV and a large number of cofactors. It forms dimeric complexes.

Its subcellular location is the cellular thylakoid membrane. Its function is as follows. One of the components of the core complex of photosystem II (PSII). PSII is a light-driven water:plastoquinone oxidoreductase that uses light energy to abstract electrons from H(2)O, generating O(2) and a proton gradient subsequently used for ATP formation. It consists of a core antenna complex that captures photons, and an electron transfer chain that converts photonic excitation into a charge separation. This subunit is found at the monomer-monomer interface and is required for correct PSII assembly and/or dimerization. This Prochlorococcus marinus (strain MIT 9211) protein is Photosystem II reaction center protein L.